The primary structure comprises 752 residues: Multifunctional tryptophan biosynthesis protein (752 aa).

One can recognise a Glutamine amidotransferase type-1 domain in the interval 3-202 (FTLLIDNYDS…IQMKGGKWGG (200 aa)). 58-60 (GPG) lines the L-glutamine pocket. The active-site Nucleophile; for GATase activity is Cys86. An L-glutamine-binding site is contributed by 136–137 (SL). Residues His176 and Glu178 each act as for GATase activity in the active site. The interval 231 to 495 (ILNRIHAQRL…DTKAFLRSLI (265 aa)) is indole-3-glycerol phosphate synthase. Residues 509-752 (LVKICGIRST…VEAFVKAVRG (244 aa)) are N-(5'-phosphoribosyl)anthranilate isomerase.

The enzyme catalyses N-(5-phospho-beta-D-ribosyl)anthranilate = 1-(2-carboxyphenylamino)-1-deoxy-D-ribulose 5-phosphate. It catalyses the reaction 1-(2-carboxyphenylamino)-1-deoxy-D-ribulose 5-phosphate + H(+) = (1S,2R)-1-C-(indol-3-yl)glycerol 3-phosphate + CO2 + H2O. It carries out the reaction chorismate + L-glutamine = anthranilate + pyruvate + L-glutamate + H(+). It participates in amino-acid biosynthesis; L-tryptophan biosynthesis; L-tryptophan from chorismate: step 1/5. It functions in the pathway amino-acid biosynthesis; L-tryptophan biosynthesis; L-tryptophan from chorismate: step 3/5. The protein operates within amino-acid biosynthesis; L-tryptophan biosynthesis; L-tryptophan from chorismate: step 4/5. Trifunctional enzyme bearing the Gln amidotransferase (GATase) domain of anthranilate synthase, indole-glycerolphosphate synthase, and phosphoribosylanthranilate isomerase activities. The polypeptide is Multifunctional tryptophan biosynthesis protein (TRP1) (Cryptococcus neoformans var. neoformans serotype D (strain JEC21 / ATCC MYA-565) (Filobasidiella neoformans)).